The sequence spans 416 residues: Phosphatidylinositol 5-phosphate 4-kinase type-2 beta (416 aa).

An N-acetylserine modification is found at Ser2. The residue at position 8 (Thr8) is a Phosphothreonine. Ser19 bears the Phosphoserine mark. Residues Ala38–Leu415 enclose the PIPK domain. The required for interaction with PIP5K1A stretch occupies residues Val64–Asp70. N6-acetyllysine is present on residues Lys94 and Lys150. Residues Arg202 to Val204 and Lys214 each bind ATP. GTP-binding positions include Asn203–Val204 and Lys214. Thr322 is modified (phosphothreonine). Ser326 is subject to Phosphoserine. Asp369 provides a ligand contact to GTP.

Homodimer. Binds TNFRSF1A. Interacts with PIP4K2A; the interaction suppresses ubiquitination by the SPOP/CUL3 complex. Probably interacts with PIP5K1A; the interaction inhibits PIP5K1A kinase activity. In terms of processing, ubiquitinated by the SPOP/CUL3 complex. Ubiquitination is stimulated by PtdIns5P levels. Phosphorylated on serine residues.

The protein resides in the endoplasmic reticulum membrane. It is found in the cell membrane. Its subcellular location is the nucleus. The protein localises to the cytoplasm. The enzyme catalyses a 1,2-diacyl-sn-glycero-3-phospho-(1D-myo-inositol-5-phosphate) + ATP = a 1,2-diacyl-sn-glycero-3-phospho-(1D-myo-inositol-4,5-bisphosphate) + ADP + H(+). The catalysed reaction is 1,2-dihexadecanoyl-sn-glycero-3-phospho-(1D-myo-inositol-5-phosphate) + ATP = 1,2-dihexadecanoyl-sn-glycero-3-phospho-(1D-myo-inositol-4,5-bisphosphate) + ADP + H(+). It carries out the reaction 1,2-dihexadecanoyl-sn-glycero-3-phospho-(1D-myo-inositol-5-phosphate) + GTP = 1,2-dihexadecanoyl-sn-glycero-3-phospho-(1D-myo-inositol-4,5-bisphosphate) + GDP + H(+). Its function is as follows. Participates in the biosynthesis of phosphatidylinositol 4,5-bisphosphate. Preferentially utilizes GTP, rather than ATP, for PI(5)P phosphorylation and its activity reflects changes in direct proportion to the physiological GTP concentration. Its GTP-sensing activity is critical for metabolic adaptation. In collaboration with PIP4K2A, has a role in mediating autophagy in times of nutrient stress. Required for autophagosome-lysosome fusion and the regulation of cellular lipid metabolism. PIP4Ks negatively regulate insulin signaling through a catalytic-independent mechanism. They interact with PIP5Ks and suppress PIP5K-mediated PtdIns(4,5)P2 synthesis and insulin-dependent conversion to PtdIns(3,4,5)P3. The polypeptide is Phosphatidylinositol 5-phosphate 4-kinase type-2 beta (Mus musculus (Mouse)).